The primary structure comprises 731 residues: MSLSRCILGLACLWHGVIASPLGAVPSNIPIATDLQTAAETVAQPIANSARKLHGKFLHITDLHPDQFYKPHSSTDEADACHRGKGPAGVYGAEVSDCDSPFALINATFDWIAANVKDDIDFVIWTGDTARHDSDEGVPRNADQVLGTNRWIADKMAELFSDSTGRHLEIPIVPTLGNNDILPHNILLPGPNSWLQHYTHIWRRFVPEAQRHSFQFGGWFYVEVIPNRLAIFSLNTLYFFDRNAGTDGCASPSEPGYKQMEWLRIQLHIMRERGMKAILMGHVPPARTDSKKLWDENCWQKYSLWLRQYRDVVVSGVFGHMNIDHFFIHDERDINVGQLAGLADNSIDIREAMDDELSVTGAADYLRELRQNWAKLQPPPTDSKNSGQLKKGKKGRKGKKKKPDVWGERYSLSLVSPSIVPNYYPALRIVEYNISGLEDTPVWRDAAKDAMSIELEQNDRQKHLDLKRQHPSHMEDDDEIDAQKKKGKKHKGGDSKPKKPDFLIPHPPAKSSPPGPAYSPQPLTLTGYTQYFANLTHINNITTEASSALLDHDEEEETWVDWLLRWRKGRHGNRKPIHPKPDPREFQFEVEYSTFNDKLYKLRDLTVKNYVELAYRISKQPKKGKAKSIDVSYESAAEEEEEEEEEEEEDLFEEVEETDEEEEQEDDDLSDGEEVDDDSDEDELETETFKKHDKKKHKKKKGKKRQNKVWMHFLTHAFVSTVEKEDLKKFT.

At 1–4 the chain is on the cytoplasmic side; the sequence is MSLS. Residues 5 to 25 form a helical; Signal-anchor for type II membrane protein membrane-spanning segment; it reads RCILGLACLWHGVIASPLGAV. The Vacuolar portion of the chain corresponds to 26–731; sequence PSNIPIATDL…VEKEDLKKFT (706 aa). N-linked (GlcNAc...) asparagine glycosylation is present at Asn-106. Residues 375-403 are disordered; it reads KLQPPPTDSKNSGQLKKGKKGRKGKKKKP. The span at 390-402 shows a compositional bias: basic residues; that stretch reads KKGKKGRKGKKKK. The N-linked (GlcNAc...) asparagine glycan is linked to Asn-433. Positions 456–522 are disordered; sequence EQNDRQKHLD…PPGPAYSPQP (67 aa). 2 stretches are compositionally biased toward basic and acidic residues: residues 457–474 and 492–501; these read QNDR…PSHM and GGDSKPKKPD. The span at 505 to 519 shows a compositional bias: pro residues; it reads PHPPAKSSPPGPAYS. Asn-534 and Asn-540 each carry an N-linked (GlcNAc...) asparagine glycan. The disordered stretch occupies residues 626 to 706; that stretch reads AKSIDVSYES…HKKKKGKKRQ (81 aa). A compositionally biased stretch (acidic residues) spans 636 to 686; that stretch reads AAEEEEEEEEEEEEDLFEEVEETDEEEEQEDDDLSDGEEVDDDSDEDELET. Positions 691-706 are enriched in basic residues; the sequence is KHDKKKHKKKKGKKRQ.

Belongs to the endopolyphosphatase PPN1 family. A divalent metal cation is required as a cofactor. Processing by proteases in the vacuole may be required for activation.

The protein localises to the vacuole membrane. It catalyses the reaction [phosphate](n+1) + n H2O = (n+1) phosphate + n H(+). Functionally, catalyzes the hydrolysis of inorganic polyphosphate (polyP) chains of many hundreds of phosphate residues into shorter lengths. The sequence is that of Endopolyphosphatase (epp-1) from Neurospora crassa (strain ATCC 24698 / 74-OR23-1A / CBS 708.71 / DSM 1257 / FGSC 987).